Here is a 110-residue protein sequence, read N- to C-terminus: Large ribosomal subunit protein uL22 (110 aa).

Belongs to the universal ribosomal protein uL22 family. As to quaternary structure, part of the 50S ribosomal subunit.

In terms of biological role, this protein binds specifically to 23S rRNA; its binding is stimulated by other ribosomal proteins, e.g. L4, L17, and L20. It is important during the early stages of 50S assembly. It makes multiple contacts with different domains of the 23S rRNA in the assembled 50S subunit and ribosome. Its function is as follows. The globular domain of the protein is located near the polypeptide exit tunnel on the outside of the subunit, while an extended beta-hairpin is found that lines the wall of the exit tunnel in the center of the 70S ribosome. This is Large ribosomal subunit protein uL22 from Nitrosomonas eutropha (strain DSM 101675 / C91 / Nm57).